The following is a 127-amino-acid chain: Small ribosomal subunit protein uS11 (127 aa).

This sequence belongs to the universal ribosomal protein uS11 family. Part of the 30S ribosomal subunit. Interacts with proteins S7 and S18. Binds to IF-3.

Functionally, located on the platform of the 30S subunit, it bridges several disparate RNA helices of the 16S rRNA. Forms part of the Shine-Dalgarno cleft in the 70S ribosome. The sequence is that of Small ribosomal subunit protein uS11 from Ruthia magnifica subsp. Calyptogena magnifica.